The following is a 781-amino-acid chain: Potassium transporter 5 (781 aa).

The span at Met-1–Gly-11 shows a compositional bias: polar residues. The disordered stretch occupies residues Met-1–Glu-24. At Met-1–His-63 the chain is on the cytoplasmic side. Residues Leu-64–Phe-84 form a helical membrane-spanning segment. At Ser-85–Gly-100 the chain is on the extracellular side. The chain crosses the membrane as a helical span at residues Val-101 to Val-121. Topologically, residues Leu-122 to Lys-187 are cytoplasmic. Residues Ile-188–Thr-208 form a helical membrane-spanning segment. Residues Pro-209–Lys-225 lie on the Extracellular side of the membrane. Residues Ser-226–Val-246 traverse the membrane as a helical segment. Over Gln-247–Ser-257 the chain is Cytoplasmic. Residues Phe-258–Phe-278 traverse the membrane as a helical segment. The Extracellular portion of the chain corresponds to Lys-279–Gly-304. A helical membrane pass occupies residues Trp-305 to Leu-325. The Cytoplasmic portion of the chain corresponds to Gly-326–Gln-334. The chain crosses the membrane as a helical span at residues Ile-335 to Tyr-355. Over Leu-356–Val-381 the chain is Extracellular. The helical transmembrane segment at Val-382–Ile-402 threads the bilayer. The Cytoplasmic segment spans residues Ala-403 to Gln-426. Residues Val-427–Phe-447 form a helical membrane-spanning segment. The Extracellular portion of the chain corresponds to Gln-448–Gly-458. Residues Ile-459–Ile-479 form a helical membrane-spanning segment. The Cytoplasmic portion of the chain corresponds to Trp-480–Lys-481. A helical transmembrane segment spans residues Thr-482–Leu-502. Residues Ser-503–Gly-512 are Extracellular-facing. The helical transmembrane segment at Gly-513–Val-533 threads the bilayer. Residues His-534–Ile-781 lie on the Cytoplasmic side of the membrane. A disordered region spans residues Val-681–Asn-707. Over residues Asp-683–Gln-700 the composition is skewed to polar residues.

The protein belongs to the HAK/KUP transporter (TC 2.A.72.3) family. Expressed in root epidermis, parenchyma of stele tissue and primordial of the lateral root, root-shoot junctions and leaf sheaths. Expressed in germinated embryonic tissue, young tillers, flower organs and pedicels.

It localises to the cell membrane. It catalyses the reaction K(+)(in) = K(+)(out). High-affinity potassium transporter. Its potassium transporter activity does not seem to be affected by high sodium and low potassium concentrations in the extracellular environment. Invloved in salt stress tolerance by enhancing root potassium uptake and translocation to the shoot to prevent sodium influx during salt stress. Involved in the positive regulation of disease resistance against the rice grassy stunt virus by promoting potassium transport and increasing endogenous plant potassium. In Oryza sativa subsp. japonica (Rice), this protein is Potassium transporter 5 (HAK5).